Consider the following 730-residue polypeptide: Translation initiation factor IF-2 (730 aa).

The tract at residues 48–151 (GNGNQKQGGS…NKAKPLPEKV (104 aa)) is disordered. 2 stretches are compositionally biased toward basic and acidic residues: residues 61 to 77 (EQQK…DHGQ) and 89 to 104 (NQHD…KGKA). Over residues 110 to 123 (KPKHKGNKNKKQHQ) the composition is skewed to basic residues. Basic and acidic residues predominate over residues 137–148 (RQPEMNKAKPLP). Residues 231–400 (ERPPVVTIMG…LLVAEVEELK (170 aa)) enclose the tr-type G domain. A G1 region spans residues 240-247 (GHVDHGKT). A GTP-binding site is contributed by 240–247 (GHVDHGKT). The G2 stretch occupies residues 265–269 (GITQH). The tract at residues 286-289 (DTPG) is G3. GTP-binding positions include 286 to 290 (DTPGH) and 340 to 343 (NKMD). Residues 340–343 (NKMD) are G4. The interval 376-378 (SAL) is G5.

Belongs to the TRAFAC class translation factor GTPase superfamily. Classic translation factor GTPase family. IF-2 subfamily.

Its subcellular location is the cytoplasm. One of the essential components for the initiation of protein synthesis. Protects formylmethionyl-tRNA from spontaneous hydrolysis and promotes its binding to the 30S ribosomal subunits. Also involved in the hydrolysis of GTP during the formation of the 70S ribosomal complex. The chain is Translation initiation factor IF-2 from Halalkalibacterium halodurans (strain ATCC BAA-125 / DSM 18197 / FERM 7344 / JCM 9153 / C-125) (Bacillus halodurans).